The sequence spans 501 residues: Putative ribose/galactose/methyl galactoside import ATP-binding protein 1 (501 aa).

ABC transporter domains are found at residues 5–237 (VSLS…VGRQ) and 249–492 (VPGE…MTRS). 37–44 (GENGAGKS) is an ATP binding site.

Belongs to the ABC transporter superfamily. Carbohydrate importer 2 (CUT2) (TC 3.A.1.2) family.

It is found in the cell inner membrane. The catalysed reaction is D-ribose(out) + ATP + H2O = D-ribose(in) + ADP + phosphate + H(+). It carries out the reaction D-galactose(out) + ATP + H2O = D-galactose(in) + ADP + phosphate + H(+). Part of an ABC transporter complex involved in carbohydrate import. Could be involved in ribose, galactose and/or methyl galactoside import. Responsible for energy coupling to the transport system. The sequence is that of Putative ribose/galactose/methyl galactoside import ATP-binding protein 1 from Rhizobium meliloti (strain 1021) (Ensifer meliloti).